The following is a 138-amino-acid chain: Large ribosomal subunit protein uL16 (138 aa).

A compositionally biased stretch (basic residues) spans 1-21; that stretch reads MLIPRKVKHRKQHHPSLRGRA. The segment at 1–22 is disordered; it reads MLIPRKVKHRKQHHPSLRGRAK.

The protein belongs to the universal ribosomal protein uL16 family. In terms of assembly, part of the 50S ribosomal subunit.

Binds 23S rRNA and is also seen to make contacts with the A and possibly P site tRNAs. The sequence is that of Large ribosomal subunit protein uL16 from Thermobifida fusca (strain YX).